The sequence spans 310 residues: Probable manganese-dependent inorganic pyrophosphatase (310 aa).

Mn(2+) contacts are provided by H9, D13, D15, D75, H97, and D149.

This sequence belongs to the PPase class C family. Requires Mn(2+) as cofactor.

The protein localises to the cytoplasm. The enzyme catalyses diphosphate + H2O = 2 phosphate + H(+). The protein is Probable manganese-dependent inorganic pyrophosphatase of Brevibacillus brevis (strain 47 / JCM 6285 / NBRC 100599).